The sequence spans 626 residues: Division abnormally delayed protein (626 aa).

The first 26 residues, 1–26 (MAARSVRLAQLLLFTLLCGFVGLSAA), serve as a signal peptide directing secretion. Residues 41–52 (LHSATTHHRRRL) are compositionally biased toward basic residues. The tract at residues 41-65 (LHSATTHHRRRLQRDSRAKDAVGGS) is disordered. N-linked (GlcNAc...) asparagine; atypical glycosylation is present at Asn97. Asn101, Asn150, and Asn187 each carry an N-linked (GlcNAc...) asparagine glycan. The tract at residues 533 to 607 (NSIQATHDIQ…GKTSGSNPLE (75 aa)) is disordered. Ser549, Ser569, Ser573, and Ser601 each carry an O-linked (Xyl...) (heparan sulfate) serine glycan. Residues 565–575 (GAHGSGDGSGD) are compositionally biased toward gly residues. A lipid anchor (GPI-anchor amidated glycine) is attached at Gly602. Positions 603–626 (SNPLEGTATWMLLTLVTMLFSSCS) are cleaved as a propeptide — removed in mature form.

It belongs to the glypican family. As to quaternary structure, interacts with nord; the interaction promotes dally degradation. Interacts with Magu. As part of the dally/ Magu complex, associates with fwe (isoforms ubi, LoseA and LoseB) and is unable to interact with fwe independently of Magu.

It is found in the cell membrane. Functionally, cell surface proteoglycan that bears heparan sulfate. Functions as a coreceptor for growth factors and morphogens, such as the products of dpp, to regulate signaling and distribution of these ligands. Required for cell division patterning during postembryonic development of the nervous system. Plays a role in dpp/BMP signaling possibly by stabilizing dpp and thereby creating a morphological gradient during wing development. Might have a role in testis development. Functions with magu and fwe in a mechanism of scaling, which utilises apoptosis to ensure that the dpp patterning gradient remains proportional to the size of the growing wing. In this mechanism, fwe represses dally and Magu-dependent activity in expanding the gradient, and dally/Magu inhibits fwe-dependent apoptosis to keep cell death rate low. When the levels of these different proteins are optimally regulated the gradient correctly scales with organ growth but when this fails, fwe-mediated apoptosis is activated to trim the developing tissue to match the correct size of the gradient. This chain is Division abnormally delayed protein (dally), found in Drosophila melanogaster (Fruit fly).